Here is a 476-residue protein sequence, read N- to C-terminus: 3-isopropylmalate dehydratase large subunit (476 aa).

C353, C413, and C416 together coordinate [4Fe-4S] cluster.

The protein belongs to the aconitase/IPM isomerase family. LeuC type 1 subfamily. As to quaternary structure, heterodimer of LeuC and LeuD. [4Fe-4S] cluster is required as a cofactor.

It carries out the reaction (2R,3S)-3-isopropylmalate = (2S)-2-isopropylmalate. It participates in amino-acid biosynthesis; L-leucine biosynthesis; L-leucine from 3-methyl-2-oxobutanoate: step 2/4. In terms of biological role, catalyzes the isomerization between 2-isopropylmalate and 3-isopropylmalate, via the formation of 2-isopropylmaleate. This Yersinia pseudotuberculosis serotype IB (strain PB1/+) protein is 3-isopropylmalate dehydratase large subunit.